The primary structure comprises 247 residues: Mitochondrial intermembrane space import and assembly protein 40 (247 aa).

Residues 1-28 constitute a mitochondrion transit peptide; that stretch reads MLSSKLVACSAGRSVQRISRTFLPAMRG. At 29-45 the chain is on the mitochondrial matrix side; it reads VATKAAAGPSRQSALSS. The helical; Signal-anchor for type II membrane protein transmembrane segment at 46–63 threads the bilayer; the sequence is YSIAAVTAIGVGASFYAL. Over 64-247 the chain is Mitochondrial intermembrane; it reads QSRSSAIQCE…SSGGKEGASA (184 aa). Basic and acidic residues predominate over residues 81–96; the sequence is RLKPKEAKGDATLHKD. The segment at 81–114 is disordered; sequence RLKPKEAKGDATLHKDAHTRHAPAEVQDERVEPV. Cystine bridges form between cysteine 149-cysteine 151, cysteine 160-cysteine 193, and cysteine 170-cysteine 183. A CHCH domain is found at 157–201; it reads HGPCGEQFKLAFSCFVYSEAEPKGIDCVDKFKAMQDCFREHPDVY. 2 consecutive short sequence motifs (cx9C motif) follow at residues 160–170 and 183–193; these read CGEQFKLAFSC and CVDKFKAMQDC. A disordered region spans residues 217–247; that stretch reads KEEANAKSNGLNDAAQEAVEESSGGKEGASA.

In terms of assembly, monomer. Requires Cu(2+) as cofactor. The cofactor is Zn(2+).

It localises to the mitochondrion inner membrane. In terms of biological role, required for the import and folding of small cysteine-containing proteins (small Tim) in the mitochondrial intermembrane space (IMS). Forms a redox cycle with ERV1 that involves a disulfide relay system. Precursor proteins to be imported into the IMS are translocated in their reduced form into the mitochondria. The oxidized form of MIA40 forms a transient intermolecular disulfide bridge with the reduced precursor protein, resulting in oxidation of the precursor protein that now contains an intramolecular disulfide bond and is able to undergo folding in the IMS. This chain is Mitochondrial intermembrane space import and assembly protein 40 (MIA40), found in Mycosarcoma maydis (Corn smut fungus).